A 265-amino-acid polypeptide reads, in one-letter code: Glutamate racemase 2 (265 aa).

Residues 7-8 (DS) and 39-40 (YG) contribute to the substrate site. The Proton donor/acceptor role is filled by Cys-70. 71 to 72 (NT) contacts substrate. The active-site Proton donor/acceptor is Cys-182. A substrate-binding site is contributed by 183–184 (TH).

The protein belongs to the aspartate/glutamate racemases family.

The catalysed reaction is L-glutamate = D-glutamate. The protein operates within cell wall biogenesis; peptidoglycan biosynthesis. Its function is as follows. Provides the (R)-glutamate required for cell wall biosynthesis. The sequence is that of Glutamate racemase 2 (yrpC) from Bacillus subtilis (strain 168).